A 238-amino-acid polypeptide reads, in one-letter code: ATP synthase subunit a (238 aa).

A run of 5 helical transmembrane segments spans residues 18–38 (MSTV…TFIG), 76–96 (FIVL…LGLP), 117–137 (VLTL…GIKI), 195–215 (LIGM…GLFI), and 216–236 (GAIQ…HKVE).

It belongs to the ATPase A chain family. F-type ATPases have 2 components, CF(1) - the catalytic core - and CF(0) - the membrane proton channel. CF(1) has five subunits: alpha(3), beta(3), gamma(1), delta(1), epsilon(1). CF(0) has three main subunits: a(1), b(2) and c(9-12). The alpha and beta chains form an alternating ring which encloses part of the gamma chain. CF(1) is attached to CF(0) by a central stalk formed by the gamma and epsilon chains, while a peripheral stalk is formed by the delta and b chains.

The protein localises to the cell membrane. Its function is as follows. Key component of the proton channel; it plays a direct role in the translocation of protons across the membrane. This is ATP synthase subunit a from Alkalihalophilus pseudofirmus (strain ATCC BAA-2126 / JCM 17055 / OF4) (Bacillus pseudofirmus).